Reading from the N-terminus, the 138-residue chain is Transcription antitermination protein NusB (138 aa).

The protein belongs to the NusB family.

Functionally, involved in transcription antitermination. Required for transcription of ribosomal RNA (rRNA) genes. Binds specifically to the boxA antiterminator sequence of the ribosomal RNA (rrn) operons. The chain is Transcription antitermination protein NusB from Helicobacter pylori (strain ATCC 700392 / 26695) (Campylobacter pylori).